The chain runs to 773 residues: Ergothioneine biosynthesis protein 1 (773 aa).

The segment at 16-322 (PESIEQSLKR…ESTIADYSTY (307 aa)) is L-histidine N(alpha)-methyltransferase. Tyrosine 51 is a binding site for L-histidine. Residues glycine 85, lysine 91, aspartate 112, and 142 to 143 (CF) contribute to the S-adenosyl-L-methionine site. Residues asparagine 172, tyrosine 212, and 287–289 (EES) contribute to the L-histidine site. Positions 347–772 (ALRKVWLFIT…YAWIGARLVK (426 aa)) are hercynylcysteine S-oxide synthase. Fe cation-binding residues include histidine 382, histidine 476, and histidine 480.

This sequence in the N-terminal section; belongs to the methyltransferase superfamily. EgtD family. It in the C-terminal section; belongs to the EgtB family. The cofactor is Fe(2+).

It localises to the cytoplasm. Its subcellular location is the nucleus. The enzyme catalyses L-histidine + 3 S-adenosyl-L-methionine = hercynine + 3 S-adenosyl-L-homocysteine + 3 H(+). It catalyses the reaction hercynine + L-cysteine + O2 = S-(hercyn-2-yl)-L-cysteine S-oxide + H2O. It participates in amino-acid biosynthesis; ergothioneine biosynthesis. Its function is as follows. Catalyzes the SAM-dependent triple methylation of the alpha-amino group of histidine to form hercynine and subsequent conjugation with cysteine and oxygen to form hercynylcysteine sulfoxide, the first two steps in the biosynthesis pathway of ergothioneine. May play a role in meiosis. This chain is Ergothioneine biosynthesis protein 1, found in Schizosaccharomyces pombe (strain 972 / ATCC 24843) (Fission yeast).